Consider the following 424-residue polypeptide: Probable methyltransferase EP424R (424 aa).

The region spanning 104-316 (QIVTNAWLKM…TYIVGKNRLR (213 aa)) is the Adrift-type SAM-dependent 2'-O-MTase domain. G136 and D229 together coordinate S-adenosyl-L-methionine. K269 (proton acceptor) is an active-site residue.

It is found in the virion. This is Probable methyltransferase EP424R from African swine fever virus (strain Badajoz 1971 Vero-adapted) (Ba71V).